The sequence spans 206 residues: 2,3-bisphosphoglycerate-dependent phosphoglycerate mutase (206 aa).

Substrate contacts are provided by residues 9–16 (RHGQSEWN), 22–23 (TG), Arg-61, 88–91 (ERDY), Lys-99, 115–116 (RR), and 159–160 (GN). His-10 serves as the catalytic Tele-phosphohistidine intermediate. Glu-88 functions as the Proton donor/acceptor in the catalytic mechanism.

It belongs to the phosphoglycerate mutase family. BPG-dependent PGAM subfamily. As to quaternary structure, homodimer.

It carries out the reaction (2R)-2-phosphoglycerate = (2R)-3-phosphoglycerate. Its pathway is carbohydrate degradation; glycolysis; pyruvate from D-glyceraldehyde 3-phosphate: step 3/5. Its function is as follows. Catalyzes the interconversion of 2-phosphoglycerate and 3-phosphoglycerate. The polypeptide is 2,3-bisphosphoglycerate-dependent phosphoglycerate mutase (Chelativorans sp. (strain BNC1)).